The primary structure comprises 363 residues: Nucleoporin SEH1 (363 aa).

WD repeat units follow at residues 15–54 (AHRD…NWRR), 60–101 (CHGG…SEKD), 108–149 (QWIR…RIYE), 158–206 (RWNL…VIYE), 223–264 (DLPC…SAIL), and 287–326 (GDHR…QWVK).

The protein belongs to the WD repeat SEC13 family. Component of the nuclear pore complex (NPC). Probably part of the GATOR complex.

It is found in the nucleus. The protein resides in the nuclear pore complex. Its subcellular location is the lysosome membrane. The protein localises to the nucleus envelope. Functionally, probable component of the nuclear pore complex (NPC) which is involved in the trafficking of macromolecules between the cytoplasm and nucleus. Its function is as follows. As a component of the GATOR complex may function in the amino acid-sensing branch of the TORC1 signaling pathway. This Caenorhabditis elegans protein is Nucleoporin SEH1.